We begin with the raw amino-acid sequence, 404 residues long: Beta-ketoacyl-[acyl-carrier-protein] synthase III, chloroplastic (404 aa).

Residues 1-43 constitute a chloroplast transit peptide; sequence MANASGFFTHPSIPNLRSRIHVPVRVSGSGFCVSNRFSKRVLC. Active-site residues include Cys-179, His-330, and Asn-360.

Belongs to the thiolase-like superfamily. FabH family.

The protein localises to the plastid. It is found in the chloroplast. The catalysed reaction is malonyl-[ACP] + acetyl-CoA + H(+) = 3-oxobutanoyl-[ACP] + CO2 + CoA. The protein operates within lipid metabolism; fatty acid biosynthesis. Its function is as follows. Catalyzes the condensation reaction of fatty acid synthesis by the addition to an acyl acceptor of two carbons from malonyl-ACP. KAS III catalyzes the first condensation reaction which initiates fatty acid synthesis and may therefore play a role in governing the total rate of fatty acid production. Possesses both acetoacetyl-ACP synthase and acetyl transacylase activities. This chain is Beta-ketoacyl-[acyl-carrier-protein] synthase III, chloroplastic, found in Arabidopsis thaliana (Mouse-ear cress).